The chain runs to 354 residues: Protein Wnt-11 (354 aa).

An N-terminal signal peptide occupies residues Met1 to Gly24. Residues Asn40 and Asn90 are each glycosylated (N-linked (GlcNAc...) asparagine). Cystine bridges form between Cys80/Cys91, Cys130/Cys138, Cys140/Cys157, Cys209/Cys223, Cys211/Cys218, Cys283/Cys314, Cys299/Cys309, Cys313/Cys353, Cys329/Cys344, Cys331/Cys341, and Cys336/Cys337. The O-palmitoleoyl serine; by PORCN moiety is linked to residue Ser215. N-linked (GlcNAc...) asparagine glycans are attached at residues Asn300 and Asn304.

It belongs to the Wnt family. Palmitoleoylation is required for efficient binding to frizzled receptors. Depalmitoleoylation leads to Wnt signaling pathway inhibition. In terms of tissue distribution, expressed in the dermatome. The expression domain is mutually exclusive to the other Wnt genes.

The protein resides in the secreted. It is found in the extracellular space. Its subcellular location is the extracellular matrix. Ligand for members of the frizzled family of seven transmembrane receptors. May play a role in the formation of dermal structure, both limb and feather buds. Is likely to signal over only few cell diameters. The chain is Protein Wnt-11 (WNT11) from Gallus gallus (Chicken).